Here is a 191-residue protein sequence, read N- to C-terminus: 3-isopropylmalate dehydratase small subunit (191 aa).

The protein belongs to the LeuD family. LeuD type 1 subfamily. In terms of assembly, heterodimer of LeuC and LeuD.

The enzyme catalyses (2R,3S)-3-isopropylmalate = (2S)-2-isopropylmalate. It functions in the pathway amino-acid biosynthesis; L-leucine biosynthesis; L-leucine from 3-methyl-2-oxobutanoate: step 2/4. Its function is as follows. Catalyzes the isomerization between 2-isopropylmalate and 3-isopropylmalate, via the formation of 2-isopropylmaleate. The chain is 3-isopropylmalate dehydratase small subunit from Anaeromyxobacter dehalogenans (strain 2CP-1 / ATCC BAA-258).